Reading from the N-terminus, the 334-residue chain is MELHIIFLILGGLLIVLLAGFSIYSARREKSRIFSNTFTTRQPATPIKNIVTDVPATLDPLQYGQNPVPTENESESETGHSVQIQQEVENSLREIKINLPVQETAEYTQTPLNTPIYHNQPAQPTFLQTAPPIEPLTIPTVEPIQPETTSVLEQSLEELERQAAERELDLYSDASVRIELAKNSIQTPIEEVAQPESTVITQNNIITLYVVAPEGQQFDGHYVVQSLEALGFQFGEYQIYHRHQHLGNNDTPVIFSVANMMQPGIFDLNNLDSYATVGLVLFMHLPSEGSDLVNLKLMLKAAESLAEALGGFILNEQRELFNETDRQAYFARVS.

Over Met1–Glu2 the chain is Periplasmic. Residues Leu3–Ile23 traverse the membrane as a helical segment. The Cytoplasmic segment spans residues Tyr24–Ser334.

It belongs to the ZipA family. As to quaternary structure, interacts with FtsZ via their C-terminal domains.

The protein localises to the cell inner membrane. Its function is as follows. Essential cell division protein that stabilizes the FtsZ protofilaments by cross-linking them and that serves as a cytoplasmic membrane anchor for the Z ring. Also required for the recruitment to the septal ring of downstream cell division proteins. The chain is Cell division protein ZipA from Haemophilus ducreyi (strain 35000HP / ATCC 700724).